A 150-amino-acid polypeptide reads, in one-letter code: Snaclec 7 (150 aa).

Positions 1 to 23 are cleaved as a signal peptide; that stretch reads MGRFISISFGLLVVFLSLSGTGA. Disulfide bonds link Cys-27-Cys-38, Cys-55-Cys-144, and Cys-121-Cys-136. The C-type lectin domain occupies 34 to 145; that stretch reads YEGYCYKVFN…CNDPRYFVCK (112 aa).

It belongs to the snaclec family. Heterodimer; disulfide-linked.

It localises to the secreted. Interferes with one step of hemostasis (modulation of platelet aggregation, or coagulation cascade, for example). The polypeptide is Snaclec 7 (Daboia siamensis (Eastern Russel's viper)).